An 86-amino-acid chain; its full sequence is Cytochrome c oxidase subunit 6B1 (86 aa).

Alanine 2 is subject to N-acetylalanine. In terms of domain architecture, CHCH spans 27–73 (TRNCWQNYLDFHRCQKAMTAKGGDISVCEWYQRVYQSLCPTSWVTDW). Positions 30–40 (CWQNYLDFHRC) match the Cx9C motif motif. 2 disulfide bridges follow: cysteine 30–cysteine 65 and cysteine 40–cysteine 54. The Cx10C motif motif lies at 54-65 (CEWYQRVYQSLC).

Belongs to the cytochrome c oxidase subunit 6B family. In terms of assembly, component of the cytochrome c oxidase (complex IV, CIV), a multisubunit enzyme composed of 14 subunits. The complex is composed of a catalytic core of 3 subunits MT-CO1, MT-CO2 and MT-CO3, encoded in the mitochondrial DNA, and 11 supernumerary subunits COX4I, COX5A, COX5B, COX6A, COX6B, COX6C, COX7A, COX7B, COX7C, COX8 and NDUFA4, which are encoded in the nuclear genome. The complex exists as a monomer or a dimer and forms supercomplexes (SCs) in the inner mitochondrial membrane with NADH-ubiquinone oxidoreductase (complex I, CI) and ubiquinol-cytochrome c oxidoreductase (cytochrome b-c1 complex, complex III, CIII), resulting in different assemblies (supercomplex SCI(1)III(2)IV(1) and megacomplex MCI(2)III(2)IV(2)).

Its subcellular location is the mitochondrion inner membrane. It functions in the pathway energy metabolism; oxidative phosphorylation. Its function is as follows. Component of the cytochrome c oxidase, the last enzyme in the mitochondrial electron transport chain which drives oxidative phosphorylation. The respiratory chain contains 3 multisubunit complexes succinate dehydrogenase (complex II, CII), ubiquinol-cytochrome c oxidoreductase (cytochrome b-c1 complex, complex III, CIII) and cytochrome c oxidase (complex IV, CIV), that cooperate to transfer electrons derived from NADH and succinate to molecular oxygen, creating an electrochemical gradient over the inner membrane that drives transmembrane transport and the ATP synthase. Cytochrome c oxidase is the component of the respiratory chain that catalyzes the reduction of oxygen to water. Electrons originating from reduced cytochrome c in the intermembrane space (IMS) are transferred via the dinuclear copper A center (CU(A)) of subunit 2 and heme A of subunit 1 to the active site in subunit 1, a binuclear center (BNC) formed by heme A3 and copper B (CU(B)). The BNC reduces molecular oxygen to 2 water molecules using 4 electrons from cytochrome c in the IMS and 4 protons from the mitochondrial matrix. The polypeptide is Cytochrome c oxidase subunit 6B1 (COX6B1) (Pongo abelii (Sumatran orangutan)).